Consider the following 901-residue polypeptide: Nuclear factor of activated T-cells, cytoplasmic 4 (901 aa).

Over residues 1–11 (MGAASCEDEEL) the composition is skewed to acidic residues. 2 disordered regions span residues 1–180 (MGAA…SSWS) and 203–361 (NEAA…TEDS). A compositionally biased stretch (pro residues) spans 61 to 81 (IPRPPPPRPGMHSPPPRPAPS). The segment covering 96-109 (GGPGGTAGGTGGGR) has biased composition (gly residues). A calcineurin-binding region spans residues 114-119 (PSIRIT). Residues 114-123 (PSIRITSISP) are compositionally biased toward low complexity. Positions 151–165 (GFGGYREAGGQGGGA) are enriched in gly residues. Positions 166-180 (FFSPSPGSSSLSSWS) are enriched in low complexity. Residues Ser168, Ser170, Ser213, and Ser217 each carry the phosphoserine modification. An SP 1 repeat occupies 213–229 (SPLPSPRASPRPWTPED). The interval 213–293 (SPLPSPRASP…LSRRGSLGEE (81 aa)) is 2 approximate SP repeats. Composition is skewed to pro residues over residues 215–227 (LPSP…PWTP) and 254–263 (GPIPASPRPA). The Nuclear localization signal signature appears at 268–270 (KRR). Residues 272-288 (SSSGTPSSASPALSRRG) are compositionally biased toward low complexity. Residues 277 to 293 (PSSASPALSRRGSLGEE) form an SP 2; approximate repeat. 3 positions are modified to phosphoserine: Ser289, Ser334, and Ser344. The 182-residue stretch at 401–582 (SALPPLDWPL…VPIECSQRSA (182 aa)) folds into the RHD domain. A DNA-binding region spans residues 430 to 437 (RAHYETEG). The IPT/TIG domain maps to 586-683 (PQVEAYSPSA…KRSPTQSFKF (98 aa)). A Nuclear localization signal motif is present at residues 672–674 (RRK). Residue Lys689 forms a Glycyl lysine isopeptide (Lys-Gly) (interchain with G-Cter in SUMO2) linkage. Disordered regions lie at residues 697 to 721 (SLRG…PRPP) and 791 to 868 (QYGG…GFRD). Pro residues predominate over residues 805–822 (FSPPAPFRPPLPSSPPLE).

Member of the multicomponent NFATC transcription complex that consists of at least two components, a pre-existing cytoplasmic component NFATC2 and an inducible nuclear component NFATC1. Other NFAT proteins, such as NFATC4, NFATC3, or members of the activating protein-1 (AP-1) family and MAF can also bind the complex. NFAT proteins can bind DNA as monomers or dimers. Component of a promoter-binding complex composed of STAT3, NFATC3 and NFATC4; complex formation is enhanced by calcineurin. Interacts with CREBBP; this interaction potentiates transcription activation. Interacts with MAPK8/JNK1 and MAPK9/JNK2. Interacts with GATA4 (via the second Zn finger). Interacts (via N-terminus) with IRAK1 (via C-terminus). Interacts with RPS6KA3. Interacts with HOMER1, HOMER2 and HOMER3; this interaction competes with calcineurin/PPP3CA-binding and hence prevents NFATC4 dephosphorylation and activation. Interacts with ESR1 and ESR2; this interaction decreases NFATC4 transcriptional activity. Interacts with MTOR and MAPK7/ERK5. Interacts with TRIM17; this interaction prevents NFATC3 nuclear localization. Interacts with TCF25 (via C-terminus); the interaction leads to suppression of NFATC4 transcription factor activity and is reduced following stimulation with angiotensin-2. Post-translationally, phosphorylated by NFATC-kinases; dephosphorylated by calcineurin/PPP3CA. Phosphorylated on Ser-168 and Ser-170 by MTOR, IRAK1, MAPK7/ERK5 and MAPK14/p38, on Ser-213 and Ser-217 by MAPK8 and MAPK9, and on Ser-289 and Ser-344 by RPS6KA3. Phosphorylated by GSK3B; this phosphorylation markedly increases NFATC4 ubiquitination. Phosphorylation by MAPK8/JNK1, MAPK9/JNK2 and RPS6KA3 may stimulate NFATC4 transcriptional activity. Phosphorylation at Ser-168 and Ser-170 is stimulated by UV irradiation. Ubiquitinated, leading to degradation by the proteasome. Ubiquitination may be stimulated by GSK3B-dependent phosphorylation. Polyubiquitin linkage mainly occurs through 'Lys-48'. Expressed in heart (at protein level).

It localises to the cytoplasm. The protein localises to the nucleus. Functionally, ca(2+)-regulated transcription factor that is involved in several processes, including the development and function of the immune, cardiovascular, musculoskeletal, and nervous systems. Involved in T-cell activation, stimulating the transcription of cytokine genes, including that of IL2 and IL4. Along with NFATC3, involved in embryonic heart development. Following JAK/STAT signaling activation and as part of a complex with NFATC3 and STAT3, binds to the alpha-beta E4 promoter region of CRYAB and activates transcription in cardiomyocytes. Involved in mitochondrial energy metabolism required for cardiac morphogenesis and function. Transactivates many genes involved in heart physiology. Along with GATA4, binds to and activates NPPB/BNP promoter. Activates NPPA/ANP/ANF and MYH7/beta-MHC transcription. Binds to and transactivates AGTR2 gene promoter. Involved in the regulation of adult hippocampal neurogenesis. Involved in BDNF-driven pro-survival signaling in hippocampal adult-born neurons. Involved in the formation of long-term spatial memory and long-term potentiation. In cochlear nucleus neurons, may play a role in deafferentation-induced apoptosis during a developmental critical period when auditory neurons depend on afferent input for survival. Binds to and activates the BACE1/Beta-secretase 1 promoter, hence may regulate the proteolytic processing of the amyloid precursor protein (APP). Plays a role in adipocyte differentiation. May be involved in myoblast differentiation into myotubes. Binds the consensus DNA sequence 5'-GGAAAAT-3'. In the presence of CREBBP, activates TNF transcription. Binds to PPARG gene promoter and regulates its activity. Binds to PPARG and REG3G gene promoters. In Rattus norvegicus (Rat), this protein is Nuclear factor of activated T-cells, cytoplasmic 4 (Nfatc4).